The chain runs to 232 residues: 7-cyano-7-deazaguanine synthase (232 aa).

8-18 is an ATP binding site; it reads FSGGQDSTTCL. Zn(2+) contacts are provided by C189, C198, C201, and C204.

The protein belongs to the QueC family. Zn(2+) is required as a cofactor.

It carries out the reaction 7-carboxy-7-deazaguanine + NH4(+) + ATP = 7-cyano-7-deazaguanine + ADP + phosphate + H2O + H(+). It participates in purine metabolism; 7-cyano-7-deazaguanine biosynthesis. Its function is as follows. Catalyzes the ATP-dependent conversion of 7-carboxy-7-deazaguanine (CDG) to 7-cyano-7-deazaguanine (preQ(0)). This Serratia proteamaculans (strain 568) protein is 7-cyano-7-deazaguanine synthase.